The following is a 500-amino-acid chain: Protein nucleotidyltransferase YdiU (500 aa).

Residues glycine 96, glycine 98, arginine 99, lysine 119, aspartate 131, glycine 132, arginine 182, and arginine 189 each contribute to the ATP site. Residue aspartate 258 is the Proton acceptor of the active site. Residues asparagine 259 and aspartate 268 each contribute to the Mg(2+) site. Residue aspartate 268 participates in ATP binding.

This sequence belongs to the SELO family. Mg(2+) serves as cofactor. The cofactor is Mn(2+).

It carries out the reaction L-seryl-[protein] + ATP = 3-O-(5'-adenylyl)-L-seryl-[protein] + diphosphate. It catalyses the reaction L-threonyl-[protein] + ATP = 3-O-(5'-adenylyl)-L-threonyl-[protein] + diphosphate. The catalysed reaction is L-tyrosyl-[protein] + ATP = O-(5'-adenylyl)-L-tyrosyl-[protein] + diphosphate. The enzyme catalyses L-histidyl-[protein] + UTP = N(tele)-(5'-uridylyl)-L-histidyl-[protein] + diphosphate. It carries out the reaction L-seryl-[protein] + UTP = O-(5'-uridylyl)-L-seryl-[protein] + diphosphate. It catalyses the reaction L-tyrosyl-[protein] + UTP = O-(5'-uridylyl)-L-tyrosyl-[protein] + diphosphate. Nucleotidyltransferase involved in the post-translational modification of proteins. It can catalyze the addition of adenosine monophosphate (AMP) or uridine monophosphate (UMP) to a protein, resulting in modifications known as AMPylation and UMPylation. The polypeptide is Protein nucleotidyltransferase YdiU (Rhizobium johnstonii (strain DSM 114642 / LMG 32736 / 3841) (Rhizobium leguminosarum bv. viciae)).